We begin with the raw amino-acid sequence, 595 residues long: NADH-quinone oxidoreductase subunit C/D (595 aa).

Positions 1–186 are NADH dehydrogenase I subunit C; sequence MAETDIAMPE…TPYMQNQAKQ (186 aa). Residues 210 to 595 are NADH dehydrogenase I subunit D; sequence DFMFLNLGPN…IDVVMADVDR (386 aa).

This sequence in the N-terminal section; belongs to the complex I 30 kDa subunit family. In the C-terminal section; belongs to the complex I 49 kDa subunit family. As to quaternary structure, NDH-1 is composed of 13 different subunits. Subunits NuoB, CD, E, F, and G constitute the peripheral sector of the complex.

The protein resides in the cell inner membrane. The enzyme catalyses a quinone + NADH + 5 H(+)(in) = a quinol + NAD(+) + 4 H(+)(out). NDH-1 shuttles electrons from NADH, via FMN and iron-sulfur (Fe-S) centers, to quinones in the respiratory chain. The immediate electron acceptor for the enzyme in this species is believed to be ubiquinone. Couples the redox reaction to proton translocation (for every two electrons transferred, four hydrogen ions are translocated across the cytoplasmic membrane), and thus conserves the redox energy in a proton gradient. The polypeptide is NADH-quinone oxidoreductase subunit C/D (Acinetobacter baylyi (strain ATCC 33305 / BD413 / ADP1)).